The sequence spans 228 residues: uncharacterized protein (228 aa).

A coiled-coil region spans residues Val-196 to Gly-228.

This is an uncharacterized protein from Acanthamoeba polyphaga (Amoeba).